The primary structure comprises 212 residues: Uracil phosphoribosyltransferase (212 aa).

5-phospho-alpha-D-ribose 1-diphosphate-binding positions include arginine 78, arginine 103, and 130 to 138 (DPMLATGSS). Residues isoleucine 193 and 198 to 200 (GDA) contribute to the uracil site. Position 199 (aspartate 199) interacts with 5-phospho-alpha-D-ribose 1-diphosphate.

It belongs to the UPRTase family. Mg(2+) serves as cofactor.

The enzyme catalyses UMP + diphosphate = 5-phospho-alpha-D-ribose 1-diphosphate + uracil. It functions in the pathway pyrimidine metabolism; UMP biosynthesis via salvage pathway; UMP from uracil: step 1/1. Its activity is regulated as follows. Allosterically activated by GTP. In terms of biological role, catalyzes the conversion of uracil and 5-phospho-alpha-D-ribose 1-diphosphate (PRPP) to UMP and diphosphate. The protein is Uracil phosphoribosyltransferase of Pseudomonas fluorescens (strain Pf0-1).